We begin with the raw amino-acid sequence, 206 residues long: Dephospho-CoA kinase (206 aa).

The DPCK domain maps to 4–204 (IVGLTGGIGS…QFYLQQAENK (201 aa)). 12–17 (GSGKTT) is an ATP binding site.

This sequence belongs to the CoaE family.

The protein resides in the cytoplasm. It catalyses the reaction 3'-dephospho-CoA + ATP = ADP + CoA + H(+). The protein operates within cofactor biosynthesis; coenzyme A biosynthesis; CoA from (R)-pantothenate: step 5/5. In terms of biological role, catalyzes the phosphorylation of the 3'-hydroxyl group of dephosphocoenzyme A to form coenzyme A. This Haemophilus influenzae (strain ATCC 51907 / DSM 11121 / KW20 / Rd) protein is Dephospho-CoA kinase.